A 185-amino-acid polypeptide reads, in one-letter code: Ribosome-recycling factor (185 aa).

This sequence belongs to the RRF family.

It is found in the cytoplasm. Its function is as follows. Responsible for the release of ribosomes from messenger RNA at the termination of protein biosynthesis. May increase the efficiency of translation by recycling ribosomes from one round of translation to another. This chain is Ribosome-recycling factor, found in Chloroflexus aurantiacus (strain ATCC 29364 / DSM 637 / Y-400-fl).